Reading from the N-terminus, the 354-residue chain is Uroporphyrinogen decarboxylase (354 aa).

Substrate is bound by residues 27-31 (RQAGR), Phe46, Asp77, Tyr153, Thr208, and His326.

It belongs to the uroporphyrinogen decarboxylase family. Homodimer.

The protein resides in the cytoplasm. The catalysed reaction is uroporphyrinogen III + 4 H(+) = coproporphyrinogen III + 4 CO2. It participates in porphyrin-containing compound metabolism; protoporphyrin-IX biosynthesis; coproporphyrinogen-III from 5-aminolevulinate: step 4/4. Functionally, catalyzes the decarboxylation of four acetate groups of uroporphyrinogen-III to yield coproporphyrinogen-III. The polypeptide is Uroporphyrinogen decarboxylase (Neisseria meningitidis serogroup A / serotype 4A (strain DSM 15465 / Z2491)).